The following is a 565-amino-acid chain: MEVHAEQLQKPPVVRGARACTTCRAAKMKCVGAEDGQRQCQRCKRANVQCIFEKHRRGRKPGSKLSEASKMLRRLEKGLNSAKSKAFSIDARHSSSYRDSHPSLGEPDDRYTNGVRSHPYSPPNGQFVSNLPPLNLPSYPDAASEYTASSTSSRTLDANDDEGDSASDRAEDNIFPANFIQRERRRNSFFRTILNPEDAPASGPSSVRCSETYSPPQSPAAPAGLNDPVSAGIVDEEHAKVLFDLIFLRLNPFINLFDPSLHTVSYVRNKSPFLFTVLIMAGCKFFRPELFKQCQKLADEYAVQAFACLTYWKGHDDNRTSTWTFVGYACRMRVEIGLNRYVPNVPSNETELQRLERRNRERTYLVLFIHDRSLSTQTGRHWMLPEDDFIRHSDRWHESSGGSVRPEDVIVAAFVQLRHIAAETTEIFQRGVDMSSEVVLRSCNSQLTQWNETWHREMQQAGGGAFHFSFLSLFRLYVRLFTNSLALRESSNRATPNIQALSACYTSAVDSLKVVSEFARMNVLRYGQETITMMSAYAALYLLSLLRNTLRYCSCTMAQLKMRIL.

The zn(2)-C6 fungal-type DNA-binding region spans 20–50 (CTTCRAAKMKCVGAEDGQRQCQRCKRANVQC). Disordered stretches follow at residues 82-170 (AKSK…SDRA) and 195-224 (NPEDAPASGPSSVRCSETYSPPQSPAAPAG). The segment covering 90–111 (DARHSSSYRDSHPSLGEPDDRY) has biased composition (basic and acidic residues). The span at 129–155 (SNLPPLNLPSYPDAASEYTASSTSSRT) shows a compositional bias: low complexity. Positions 203 to 215 (GPSSVRCSETYSP) are enriched in polar residues.

It is found in the nucleus. The protein is Protein priB (priB) of Lentinula edodes (Shiitake mushroom).